We begin with the raw amino-acid sequence, 335 residues long: N-acetylglucosaminyl-phosphatidylinositol de-N-acetylase (335 aa).

The chain crosses the membrane as a helical span at residues 3–23 (SAFTFLSLAIFPLALFIFWTL). Asparagine 128 and asparagine 153 each carry an N-linked (GlcNAc...) asparagine glycan.

The protein belongs to the PIGL family.

It is found in the endoplasmic reticulum membrane. It carries out the reaction a 6-(N-acetyl-alpha-D-glucosaminyl)-1-(1,2-diacyl-sn-glycero-3-phospho)-1D-myo-inositol + H2O = a 6-(alpha-D-glucosaminyl)-1-(1,2-diacyl-sn-glycero-3-phospho)-1D-myo-inositol + acetate. Its pathway is glycolipid biosynthesis; glycosylphosphatidylinositol-anchor biosynthesis. In terms of biological role, involved in the second step of GPI biosynthesis. De-N-acetylation of N-acetylglucosaminyl-phosphatidylinositol. The sequence is that of N-acetylglucosaminyl-phosphatidylinositol de-N-acetylase from Arthroderma benhamiae (strain ATCC MYA-4681 / CBS 112371) (Trichophyton mentagrophytes).